A 94-amino-acid polypeptide reads, in one-letter code: uncharacterized protein (94 aa).

The signal sequence occupies residues 1-19; that stretch reads MKFSGLILGALALVSGAIA.

The protein belongs to the protease inhibitor I9 family.

This is an uncharacterized protein from Neurospora crassa (strain ATCC 24698 / 74-OR23-1A / CBS 708.71 / DSM 1257 / FGSC 987).